The chain runs to 475 residues: MMINVQTVAVIGSGTMGAGIAEVAASHGHQVLLYDISAEALTRAIDGIHARLNSRVTRGKLTAETCERTLKRLIPVTDIHALAAADLVIEAASERLEVKKALFAQLAEVCPPQTLLTTNTSSISITAIAAEIKNPERVAGLHFFNPAPVMKLVEVVSGLATAAEVVEQLCELTLSWGKQPVRCHSTPGFIVNRVARPYYSEAWRALEEQVAAPEVIDAALRDGAGFPMGPLELTDLIGQDVNFAVTCSVFNAFWQERRFLPSLVQQELVIGGRLGKKSGLGVYDWRAEREAVVGLEAVSDSFSPMKVEKKSDGVTEIDDVLLIETQGETAQALAIRLARPVVVIDKMAGKVVTIAAAAVNPDSATRKAIYYLQQQGKTVLQIADYPGMLIWRTVAMIINEALDALQKGVASEQDIDTAMRLGVNYPYGPLAWGAQLGWQRILRLLENLQHHYGEERYRPCSLLRQRALLESGYES.

This sequence belongs to the 3-hydroxyacyl-CoA dehydrogenase family. In terms of assembly, homotrimer.

The enzyme catalyses (3S)-3-hydroxyadipyl-CoA + NAD(+) = 3-oxoadipyl-CoA + NADH + H(+). It functions in the pathway aromatic compound metabolism; phenylacetate degradation. In terms of biological role, catalyzes the oxidation of 3-hydroxyadipyl-CoA to yield 3-oxoadipyl-CoA. This is 3-hydroxyadipyl-CoA dehydrogenase (paaH) from Escherichia coli (strain K12).